The chain runs to 241 residues: 1-(5-phosphoribosyl)-5-[(5-phosphoribosylamino)methylideneamino] imidazole-4-carboxamide isomerase (241 aa).

Asp-8 (proton acceptor) is an active-site residue. Asp-130 serves as the catalytic Proton donor.

Belongs to the HisA/HisF family.

Its subcellular location is the cytoplasm. The catalysed reaction is 1-(5-phospho-beta-D-ribosyl)-5-[(5-phospho-beta-D-ribosylamino)methylideneamino]imidazole-4-carboxamide = 5-[(5-phospho-1-deoxy-D-ribulos-1-ylimino)methylamino]-1-(5-phospho-beta-D-ribosyl)imidazole-4-carboxamide. It functions in the pathway amino-acid biosynthesis; L-histidine biosynthesis; L-histidine from 5-phospho-alpha-D-ribose 1-diphosphate: step 4/9. This is 1-(5-phosphoribosyl)-5-[(5-phosphoribosylamino)methylideneamino] imidazole-4-carboxamide isomerase from Flavobacterium psychrophilum (strain ATCC 49511 / DSM 21280 / CIP 103535 / JIP02/86).